Here is a 59-residue protein sequence, read N- to C-terminus: Cecropin-B2 (59 aa).

The first 23 residues, 1-23 (MNFNKLFLIVILAALLLLGQTEA), serve as a signal peptide directing secretion. Position 57 is a leucine amide (leucine 57).

The protein belongs to the cecropin family.

It localises to the secreted. Its function is as follows. Cecropins have lytic and antibacterial activity against several Gram-positive and Gram-negative bacteria. The sequence is that of Cecropin-B2 (CECB2) from Culex pipiens pipiens (Northern house mosquito).